Here is a 321-residue protein sequence, read N- to C-terminus: 2,3,4,5-tetrahydropyridine-2,6-dicarboxylate N-succinyltransferase (321 aa).

Mg(2+) contacts are provided by Asp-166 and Glu-183. Glu-199 serves as the catalytic Acyl-anhydride intermediate. Succinyl-CoA-binding positions include Arg-201, Gly-216, Ser-219, Ala-242, 257–258 (EA), Gly-265, Lys-281, and 294–297 (RRNS).

Belongs to the type 2 tetrahydrodipicolinate N-succinyltransferase family. As to quaternary structure, homotrimer.

Its subcellular location is the cytoplasm. The catalysed reaction is (S)-2,3,4,5-tetrahydrodipicolinate + succinyl-CoA + H2O = (S)-2-succinylamino-6-oxoheptanedioate + CoA. It functions in the pathway amino-acid biosynthesis; L-lysine biosynthesis via DAP pathway; LL-2,6-diaminopimelate from (S)-tetrahydrodipicolinate (succinylase route): step 1/3. Catalyzes the conversion of the cyclic tetrahydrodipicolinate (THDP) into the acyclic N-succinyl-L-2-amino-6-oxopimelate using succinyl-CoA. The polypeptide is 2,3,4,5-tetrahydropyridine-2,6-dicarboxylate N-succinyltransferase (Micrococcus luteus (strain ATCC 4698 / DSM 20030 / JCM 1464 / CCM 169 / CCUG 5858 / IAM 1056 / NBRC 3333 / NCIMB 9278 / NCTC 2665 / VKM Ac-2230) (Micrococcus lysodeikticus)).